The chain runs to 626 residues: Protein ALEX (626 aa).

4 disordered regions span residues 1–29 (MMAR…LEPM), 173–223 (TTAH…AAHP), 236–473 (AAPG…APRS), and 556–612 (AASV…NNSR). Polar residues-rich tracts occupy residues 186-195 (KSTAAASSRQ) and 255-270 (GSTT…QSRL). The segment covering 281–312 (QIRESEQRDPQLRRKQQRWKEPLMPRREEKYP) has biased composition (basic and acidic residues). A compositionally biased stretch (low complexity) spans 337–346 (QPILTPGQPQ). Positions 366 to 399 (IPTPGQPLPPQPIPTPGRPLTPQPIPTPGRPLTP) are enriched in pro residues. The segment covering 416–435 (RLLRPGQPMSPQLRQTQGLP) has biased composition (low complexity). The span at 436–445 (LPQPLLPPGQ) shows a compositional bias: pro residues. Positions 570–579 (ALSRSRRYPW) are enriched in basic residues. The segment covering 600-611 (RRNAVSSSTNNS) has biased composition (polar residues).

It belongs to the ALEX family. As to quaternary structure, interacts with the N-terminal region of the XLas isoforms of guanine nucleotide-binding protein G(s) subunit alpha.

It localises to the cell membrane. It is found in the cell projection. The protein localises to the ruffle. Its function is as follows. May inhibit the adenylyl cyclase-stimulating activity of guanine nucleotide-binding protein G(s) subunit alpha which is produced from the same locus in a different open reading frame. The protein is Protein ALEX of Homo sapiens (Human).